The following is a 637-amino-acid chain: Phospholipase B (637 aa).

Residues 1-19 form the signal peptide; sequence MSIITTAFALSLLATTAFA. Residues 46–572 enclose the PLA2c domain; that stretch reads DCPSNVTWIR…DTWCWAGDDN (527 aa). Residues asparagine 50, asparagine 56, asparagine 122, asparagine 231, asparagine 246, asparagine 272, asparagine 314, asparagine 343, asparagine 387, asparagine 433, asparagine 481, asparagine 501, asparagine 528, asparagine 553, asparagine 572, asparagine 594, and asparagine 606 are each glycosylated (N-linked (GlcNAc...) asparagine).

Belongs to the lysophospholipase family. In terms of processing, N-glycosylated.

It is found in the secreted. The enzyme catalyses a 1-acyl-sn-glycero-3-phosphocholine + H2O = sn-glycerol 3-phosphocholine + a fatty acid + H(+). Its function is as follows. Exhibits phospholipase B (PLB), lysophospholipase (LPL) and lysophospholipase/transacylase (LPTA) activities. This chain is Phospholipase B (PLB1), found in Cryptococcus neoformans var. neoformans serotype D (strain B-3501A) (Filobasidiella neoformans).